The following is a 283-amino-acid chain: Orotidine 5'-phosphate decarboxylase (283 aa).

Catalysis depends on Lys-97, which acts as the Proton donor.

The protein belongs to the OMP decarboxylase family. Type 2 subfamily.

It catalyses the reaction orotidine 5'-phosphate + H(+) = UMP + CO2. Its pathway is pyrimidine metabolism; UMP biosynthesis via de novo pathway; UMP from orotate: step 2/2. This chain is Orotidine 5'-phosphate decarboxylase, found in Clostridium botulinum (strain Kyoto / Type A2).